Reading from the N-terminus, the 202-residue chain is Adenylyl-sulfate kinase (202 aa).

Position 31–38 (glycine 31–serine 38) interacts with ATP. Serine 105 functions as the Phosphoserine intermediate in the catalytic mechanism.

This sequence belongs to the APS kinase family.

The enzyme catalyses adenosine 5'-phosphosulfate + ATP = 3'-phosphoadenylyl sulfate + ADP + H(+). The protein operates within sulfur metabolism; hydrogen sulfide biosynthesis; sulfite from sulfate: step 2/3. Catalyzes the synthesis of activated sulfate. The chain is Adenylyl-sulfate kinase (MET14) from Saccharomyces bayanus (Yeast).